Reading from the N-terminus, the 598-residue chain is Aspartate--tRNA ligase (598 aa).

Residue glutamate 173 coordinates L-aspartate. The segment at 197–200 (QLFK) is aspartate. Position 219 (arginine 219) interacts with L-aspartate. ATP is bound by residues 219-221 (RDE) and glutamine 228. Histidine 449 lines the L-aspartate pocket. ATP is bound at residue glutamate 483. Arginine 490 provides a ligand contact to L-aspartate. Residue 535–538 (GLDR) participates in ATP binding.

It belongs to the class-II aminoacyl-tRNA synthetase family. Type 1 subfamily. As to quaternary structure, homodimer.

Its subcellular location is the cytoplasm. The enzyme catalyses tRNA(Asp) + L-aspartate + ATP = L-aspartyl-tRNA(Asp) + AMP + diphosphate. In terms of biological role, catalyzes the attachment of L-aspartate to tRNA(Asp) in a two-step reaction: L-aspartate is first activated by ATP to form Asp-AMP and then transferred to the acceptor end of tRNA(Asp). This chain is Aspartate--tRNA ligase, found in Shewanella halifaxensis (strain HAW-EB4).